Reading from the N-terminus, the 422-residue chain is p-hydroxyphenylacetate 3-hydroxylase, oxygenase component (422 aa).

An FMN-binding site is contributed by W112. Substrate-binding residues include H120 and S146. FMN is bound by residues 146-148 (SSI) and 169-171 (WSS). Residue 263–266 (RPYF) participates in substrate binding. FMN-binding positions include R292, Y296, 374 to 375 (AT), and 396 to 397 (HA). Position 296 (Y296) interacts with substrate.

This sequence belongs to the HpaH/HsaA monooxygenase family. As to quaternary structure, homotetramer. The p-hydroxyphenylacetate 3-hydroxylase (HpaH) is composed of an oxygenase component C2 and a reductase component C1.

The enzyme catalyses 4-hydroxyphenylacetate + FMNH2 + O2 = 3,4-dihydroxyphenylacetate + FMN + H2O + H(+). The catalysed reaction is 4-hydroxyphenylacetate + FADH2 + O2 = 3,4-dihydroxyphenylacetate + FAD + H2O + H(+). It participates in aromatic compound metabolism; 4-hydroxyphenylacetate degradation; pyruvate and succinate semialdehyde from 4-hydroxyphenylacetate: step 1/7. With respect to regulation, inhibited by flavin concentrations greater than 15 uM. Also inhibited by excess p-hydroxyphenylacetate (HPA). Functionally, oxygenase component of a two-component system that utilizes reduced FMN (FMNH2) supplied by the reductase component to catalyze the hydroxylation of 4-hydroxyphenylacetic acid, leading to the production of 3,4-dihydroxyphenylacetate (3,4-DHPA). Also utilizes other reduced flavins such as FADH2 and reduced riboflavin to a lesser extent. Only the compounds with a hydroxyl group in the para (p-) position can be hydroxylated. May also oxidize phenol to catechol, and hydroxylate other phenol derivatives. The chain is p-hydroxyphenylacetate 3-hydroxylase, oxygenase component from Acinetobacter baumannii.